The following is a 339-amino-acid chain: Dihydroorotate dehydrogenase (quinone) (339 aa).

Residues 62-66 (AGMDK) and T86 contribute to the FMN site. K66 is a substrate binding site. 111 to 115 (NRMGF) serves as a coordination point for substrate. FMN-binding residues include N139 and N172. N172 is a binding site for substrate. S175 acts as the Nucleophile in catalysis. N177 contributes to the substrate binding site. Positions 217 and 245 each coordinate FMN. 246–247 (NT) is a binding site for substrate. Residues G268, G297, and 318-319 (YS) each bind FMN.

The protein belongs to the dihydroorotate dehydrogenase family. Type 2 subfamily. As to quaternary structure, monomer. It depends on FMN as a cofactor.

The protein localises to the cell membrane. It catalyses the reaction (S)-dihydroorotate + a quinone = orotate + a quinol. Its pathway is pyrimidine metabolism; UMP biosynthesis via de novo pathway; orotate from (S)-dihydroorotate (quinone route): step 1/1. In terms of biological role, catalyzes the conversion of dihydroorotate to orotate with quinone as electron acceptor. This chain is Dihydroorotate dehydrogenase (quinone), found in Shewanella oneidensis (strain ATCC 700550 / JCM 31522 / CIP 106686 / LMG 19005 / NCIMB 14063 / MR-1).